A 348-amino-acid chain; its full sequence is Myricetin O-methyltransferase (348 aa).

The residue at position 1 (Met1) is an N-acetylmethionine. Residues Gly189, Asp212, Asp232, Met233, and Lys246 each coordinate S-adenosyl-L-methionine. The active-site Proton acceptor is His250.

Post-translationally, the N-terminus is blocked.

It catalyses the reaction S-adenosyl-L-methionine + a 3'-hydroxyflavonoid = S-adenosyl-L-homocysteine + a 3'-methoxyflavonoid.. It carries out the reaction S-adenosyl-L-methionine + a 5'-hydroxy-3'-methoxyflavonoid = S-adenosyl-L-homocysteine + a 3',5'-dimethoxyflavonoid.. Methylates myricetin and dihydromyricetin at 2 sites. Inactive towards 16-hydroxytabersonine, the phenylpropanoids 5-hydroxyferulate, caffeate and their CoA-esters, flavones and flavanones possessing 2 or 3 B-ring hydroxyl groups. This Catharanthus roseus (Madagascar periwinkle) protein is Myricetin O-methyltransferase.